We begin with the raw amino-acid sequence, 490 residues long: Aspartyl/glutamyl-tRNA(Asn/Gln) amidotransferase subunit B (490 aa).

The protein belongs to the GatB/GatE family. GatB subfamily. Heterotrimer of A, B and C subunits.

It carries out the reaction L-glutamyl-tRNA(Gln) + L-glutamine + ATP + H2O = L-glutaminyl-tRNA(Gln) + L-glutamate + ADP + phosphate + H(+). The catalysed reaction is L-aspartyl-tRNA(Asn) + L-glutamine + ATP + H2O = L-asparaginyl-tRNA(Asn) + L-glutamate + ADP + phosphate + 2 H(+). Its function is as follows. Allows the formation of correctly charged Asn-tRNA(Asn) or Gln-tRNA(Gln) through the transamidation of misacylated Asp-tRNA(Asn) or Glu-tRNA(Gln) in organisms which lack either or both of asparaginyl-tRNA or glutaminyl-tRNA synthetases. The reaction takes place in the presence of glutamine and ATP through an activated phospho-Asp-tRNA(Asn) or phospho-Glu-tRNA(Gln). This is Aspartyl/glutamyl-tRNA(Asn/Gln) amidotransferase subunit B from Burkholderia vietnamiensis (strain G4 / LMG 22486) (Burkholderia cepacia (strain R1808)).